The chain runs to 122 residues: uncharacterized protein (122 aa).

This is an uncharacterized protein from Carica papaya (Papaya).